Here is a 114-residue protein sequence, read N- to C-terminus: Large ribosomal subunit protein uL22 (114 aa).

It belongs to the universal ribosomal protein uL22 family. Part of the 50S ribosomal subunit.

Its function is as follows. This protein binds specifically to 23S rRNA; its binding is stimulated by other ribosomal proteins, e.g. L4, L17, and L20. It is important during the early stages of 50S assembly. It makes multiple contacts with different domains of the 23S rRNA in the assembled 50S subunit and ribosome. Functionally, the globular domain of the protein is located near the polypeptide exit tunnel on the outside of the subunit, while an extended beta-hairpin is found that lines the wall of the exit tunnel in the center of the 70S ribosome. This Aeromonas salmonicida (strain A449) protein is Large ribosomal subunit protein uL22.